Here is a 476-residue protein sequence, read N- to C-terminus: Bifunctional protein HldE (476 aa).

Residues 1–319 (MKVTLPAFEK…GALASHQGES (319 aa)) are ribokinase. Residue 195-198 (NMSE) participates in ATP binding. D264 is a catalytic residue. Residues 345-476 (MTNGCFDILH…SIIQNIMARQ (132 aa)) are cytidylyltransferase.

This sequence in the N-terminal section; belongs to the carbohydrate kinase PfkB family. The protein in the C-terminal section; belongs to the cytidylyltransferase family. As to quaternary structure, homodimer.

It catalyses the reaction D-glycero-beta-D-manno-heptose 7-phosphate + ATP = D-glycero-beta-D-manno-heptose 1,7-bisphosphate + ADP + H(+). It carries out the reaction D-glycero-beta-D-manno-heptose 1-phosphate + ATP + H(+) = ADP-D-glycero-beta-D-manno-heptose + diphosphate. It functions in the pathway nucleotide-sugar biosynthesis; ADP-L-glycero-beta-D-manno-heptose biosynthesis; ADP-L-glycero-beta-D-manno-heptose from D-glycero-beta-D-manno-heptose 7-phosphate: step 1/4. It participates in nucleotide-sugar biosynthesis; ADP-L-glycero-beta-D-manno-heptose biosynthesis; ADP-L-glycero-beta-D-manno-heptose from D-glycero-beta-D-manno-heptose 7-phosphate: step 3/4. In terms of biological role, catalyzes the phosphorylation of D-glycero-D-manno-heptose 7-phosphate at the C-1 position to selectively form D-glycero-beta-D-manno-heptose-1,7-bisphosphate. Its function is as follows. Catalyzes the ADP transfer from ATP to D-glycero-beta-D-manno-heptose 1-phosphate, yielding ADP-D-glycero-beta-D-manno-heptose. This is Bifunctional protein HldE from Shewanella denitrificans (strain OS217 / ATCC BAA-1090 / DSM 15013).